The sequence spans 76 residues: cAMP-dependent protein kinase inhibitor alpha (76 aa).

A Blocked amino end (Thr) modification is found at T2. Residues K49–S76 are disordered.

Belongs to the PKI family.

Extremely potent competitive inhibitor of cAMP-dependent protein kinase activity, this protein interacts with the catalytic subunit of the enzyme after the cAMP-induced dissociation of its regulatory chains. This Gallus gallus (Chicken) protein is cAMP-dependent protein kinase inhibitor alpha (PKIA).